Consider the following 389-residue polypeptide: Probable serine/threonine-protein kinase PBL24 (389 aa).

Positions Met1–Arg36 are disordered. The S-palmitoyl cysteine moiety is linked to residue Cys3. A Protein kinase domain is found at Phe71–Met348. ATP is bound by residues Ile77–Val85 and Lys100. Asp198 functions as the Proton acceptor in the catalytic mechanism. Residues Ser202 and Ser232 each carry the phosphoserine modification. Phosphothreonine is present on Thr238. Tyr246 is modified (phosphotyrosine).

Belongs to the protein kinase superfamily. Ser/Thr protein kinase family.

It localises to the cell membrane. The catalysed reaction is L-seryl-[protein] + ATP = O-phospho-L-seryl-[protein] + ADP + H(+). It catalyses the reaction L-threonyl-[protein] + ATP = O-phospho-L-threonyl-[protein] + ADP + H(+). Functionally, may be involved in plant defense signaling. The polypeptide is Probable serine/threonine-protein kinase PBL24 (Arabidopsis thaliana (Mouse-ear cress)).